A 266-amino-acid chain; its full sequence is Cell division cycle-associated protein 3 (266 aa).

The interval 1–84 is disordered; that stretch reads MGSTQSVSGT…TPMKISGPDP (84 aa). 2 positions are modified to phosphoserine: S29 and S31. Over residues 32–46 the composition is skewed to polar residues; it reads AGIQRTPIQVESSPQ. T37 carries the phosphothreonine modification. Residues S44 and S67 each carry the phosphoserine modification. Position 75 is a phosphothreonine (T75). Residues 90–119 form an F-box-like region; it reads KELSEVLETEASESISSPELALPRETPLFY. S93 is modified (phosphoserine). Disordered regions lie at residues 120–225 and 242–266; these read DLDL…LSEN and KAGG…LLES. The segment covering 143 to 156 has biased composition (basic and acidic residues); it reads LDPKQVFTKEEAKQ. The segment covering 157 to 168 has biased composition (polar residues); sequence SAETIAASQNSD. A Phosphoserine modification is found at S197. T200 carries the phosphothreonine modification. Residues 203–213 are compositionally biased toward polar residues; that stretch reads QDDNSPGTLTL. S207 bears the Phosphoserine mark. A Phosphothreonine modification is found at T210. Positions 250–259 are enriched in basic and acidic residues; it reads PNQDHDKENQ. The KEN box signature appears at 256 to 258; the sequence is KEN.

Interacts with SKP1. Part of a SCF (SKP1-cullin-F-box) protein ligase complex. Post-translationally, ubiquitinated and degraded by the APC/C-Cdh1 complex.

The protein resides in the cytoplasm. It localises to the cytosol. The protein operates within protein modification; protein ubiquitination. F-box-like protein which is required for entry into mitosis. Acts by participating in E3 ligase complexes that mediate the ubiquitination and degradation of WEE1 kinase at G2/M phase. This Mus musculus (Mouse) protein is Cell division cycle-associated protein 3 (Cdca3).